The sequence spans 56 residues: Large ribosomal subunit protein bL33 (56 aa).

This sequence belongs to the bacterial ribosomal protein bL33 family.

This is Large ribosomal subunit protein bL33 from Orientia tsutsugamushi (strain Ikeda) (Rickettsia tsutsugamushi).